The primary structure comprises 151 residues: MAEGPSLHPKLQVDSNIPIEISSQIPQEPARNLAFQMRQSPLVTPGSTTKSSLSVPERNLLKQESEGPSRQSGCMPLSDKYVNKQTSPMASRKFRKERTVYTKEEQGLLQKHFDECSTQTRRKLWSWHYQLVLQRGRLRYGSRTTELSTGR.

Positions 1–97 are disordered; it reads MAEGPSLHPK…PMASRKFRKE (97 aa). Residues 37-54 show a composition bias toward polar residues; the sequence is MRQSPLVTPGSTTKSSLS.

It belongs to the paired homeobox family. Obox subfamily. Specifically expressed in oocytes and early embryos.

Its function is as follows. In contrast to other Obox family proteins, displays a truncated homeobox domain and does not bind DNA. The protein is Inactive oocyte-specific homeobox protein 2 of Mus musculus (Mouse).